The following is a 227-amino-acid chain: Phosphatidylserine decarboxylase proenzyme (227 aa).

Ser184 serves as the catalytic Schiff-base intermediate with substrate; via pyruvic acid. Ser184 carries the pyruvic acid (Ser); by autocatalysis modification.

The protein belongs to the phosphatidylserine decarboxylase family. PSD-A subfamily. In terms of assembly, heterodimer of a large membrane-associated beta subunit and a small pyruvoyl-containing alpha subunit. Pyruvate is required as a cofactor. Post-translationally, is synthesized initially as an inactive proenzyme. Formation of the active enzyme involves a self-maturation process in which the active site pyruvoyl group is generated from an internal serine residue via an autocatalytic post-translational modification. Two non-identical subunits are generated from the proenzyme in this reaction, and the pyruvate is formed at the N-terminus of the alpha chain, which is derived from the carboxyl end of the proenzyme. The post-translation cleavage follows an unusual pathway, termed non-hydrolytic serinolysis, in which the side chain hydroxyl group of the serine supplies its oxygen atom to form the C-terminus of the beta chain, while the remainder of the serine residue undergoes an oxidative deamination to produce ammonia and the pyruvoyl prosthetic group on the alpha chain.

It is found in the cell membrane. The catalysed reaction is a 1,2-diacyl-sn-glycero-3-phospho-L-serine + H(+) = a 1,2-diacyl-sn-glycero-3-phosphoethanolamine + CO2. It participates in phospholipid metabolism; phosphatidylethanolamine biosynthesis; phosphatidylethanolamine from CDP-diacylglycerol: step 2/2. Functionally, catalyzes the formation of phosphatidylethanolamine (PtdEtn) from phosphatidylserine (PtdSer). In Ehrlichia ruminantium (strain Welgevonden), this protein is Phosphatidylserine decarboxylase proenzyme.